We begin with the raw amino-acid sequence, 341 residues long: MIKVAINGYGTIGKRVADAVAAQPDMEVIGVSKTSVSAEAYIAKERGYPLYIADLGKKPAFEKAGIEVAGDVEAMLKAADIVVDATPGGVGEKNRPIYEKLGKKAIFQGGEDHEVAGFSFNAHANYNEAENHQFARVVSCNSTGLVRIIHALDQAFGVARVRAVMVRRGADPDDVKRGPIDAIVLNPASIPSHHGPDVNTVLPHINIVTLAMIVPTTFMHMHSIQMDLKKETTREEVLKVFENHSRIGLVRKTMGIKSNAQLREYTQDLGRPRTDLWENGVFEESVSILDGKEFYCFQAIHQEADVVPENIDCIRALMGTVKDPQESIRMTNEALGLVAIG.

NAD(+) is bound by residues 11-12 (TI) and G110. 139–141 (SCN) contacts D-glyceraldehyde 3-phosphate. Catalysis depends on C140, which acts as the Nucleophile. R168 provides a ligand contact to NAD(+). 194 to 195 (HG) is a binding site for D-glyceraldehyde 3-phosphate. Residue Q302 coordinates NAD(+).

The protein belongs to the glyceraldehyde-3-phosphate dehydrogenase family. In terms of assembly, homotetramer.

It is found in the cytoplasm. It catalyses the reaction D-glyceraldehyde 3-phosphate + phosphate + NADP(+) = (2R)-3-phospho-glyceroyl phosphate + NADPH + H(+). The catalysed reaction is D-glyceraldehyde 3-phosphate + phosphate + NAD(+) = (2R)-3-phospho-glyceroyl phosphate + NADH + H(+). It functions in the pathway carbohydrate degradation; glycolysis; pyruvate from D-glyceraldehyde 3-phosphate: step 1/5. This is Glyceraldehyde-3-phosphate dehydrogenase from Methanoculleus marisnigri (strain ATCC 35101 / DSM 1498 / JR1).